The sequence spans 156 residues: ATP synthase subunit b (156 aa).

A helical transmembrane segment spans residues 7-27 (LFAQMIVFFVLWWVVARFVWP).

The protein belongs to the ATPase B chain family. F-type ATPases have 2 components, F(1) - the catalytic core - and F(0) - the membrane proton channel. F(1) has five subunits: alpha(3), beta(3), gamma(1), delta(1), epsilon(1). F(0) has three main subunits: a(1), b(2) and c(10-14). The alpha and beta chains form an alternating ring which encloses part of the gamma chain. F(1) is attached to F(0) by a central stalk formed by the gamma and epsilon chains, while a peripheral stalk is formed by the delta and b chains.

Its subcellular location is the cell membrane. In terms of biological role, f(1)F(0) ATP synthase produces ATP from ADP in the presence of a proton or sodium gradient. F-type ATPases consist of two structural domains, F(1) containing the extramembraneous catalytic core and F(0) containing the membrane proton channel, linked together by a central stalk and a peripheral stalk. During catalysis, ATP synthesis in the catalytic domain of F(1) is coupled via a rotary mechanism of the central stalk subunits to proton translocation. Functionally, component of the F(0) channel, it forms part of the peripheral stalk, linking F(1) to F(0). This is ATP synthase subunit b from Polynucleobacter asymbioticus (strain DSM 18221 / CIP 109841 / QLW-P1DMWA-1) (Polynucleobacter necessarius subsp. asymbioticus).